We begin with the raw amino-acid sequence, 444 residues long: Glutamate dehydrogenase (444 aa).

The active site involves K124.

The protein belongs to the Glu/Leu/Phe/Val dehydrogenases family. In terms of assembly, homohexamer.

It catalyses the reaction L-glutamate + NAD(+) + H2O = 2-oxoglutarate + NH4(+) + NADH + H(+). The catalysed reaction is L-glutamate + NADP(+) + H2O = 2-oxoglutarate + NH4(+) + NADPH + H(+). The protein is Glutamate dehydrogenase (gdhA) of Bacteroides thetaiotaomicron (strain ATCC 29148 / DSM 2079 / JCM 5827 / CCUG 10774 / NCTC 10582 / VPI-5482 / E50).